A 578-amino-acid chain; its full sequence is MNISVDLETNYAELVLDVGRVTLGENSRKKMKDCKLRKKQNESVSRAMCALLNSGGGVIKAEIENEDYSYTKDGIGLDLENSFSNILLFVPEYLDFMQNGNYFLIFVKSWSLNTSGLRITTLSSNLYKRDITSAKVMNATAALEFLKDMKKTRGRLYLRPELLAKRPCVDIQEENNMKALAGVFFDRTELDRKEKLTFTESTHVEIKNFSTEKLLQRIKEILPQYVSAFANTDGGYLFIGLNEDKEIIGFKAEMSDLDDLEREIEKSIRKMPVHHFCMEKKKINYSCKFLGVYDKGSLCGYVCALRVERFCCAVFAKEPDSWHVKDNRVMQLTRKEWIQFMVEAEPKFSSSYEEVISQINTSLPAPHSWPLLEWQRQRHHCPGLSGRITYTPENLCRKLFLQHEGLKQLICEEMDSVRKGSLIFSRSWSVDLGLQENHKVLCDALLISQDSPPVLYTFHMVQDEEFKGYSTQTALTLKQKLAKIGGYTKKVCVMTKIFYLSPEGMTSCQYDLRSQVIYPESYYFTRRKYLLKALFKALKRLKSLRDQFSFAENLYQIIGIDCFQKNDKKMFKSCRRLT.

Position 368 is a phosphoserine (S368). The interval 551 to 560 (AENLYQIIGI) is mediates interaction with PDE3A. Position 573 is a phosphoserine (S573).

Belongs to the Schlafen family. Subgroup II subfamily. In terms of assembly, homodimer. Interacts with PDE3A; direct low affinity interaction which is stimulated by binding of 17beta-estradiol/E2 to PDE3A and that positively regulates the ribonuclease activity of SLFN12. Interacts with SERPINB12; as part of a pathway regulating cell differentiation. Post-translationally, phosphorylation at Ser-368 and Ser-573 negatively regulates the ribonuclease activity. Dephosphorylation is induced by the interaction with PDE3A and stimulates the rRNA ribonuclease activity.

The protein localises to the nucleus. The protein resides in the cytoplasm. It is found in the cytosol. Its function is as follows. Ribonuclease which is part of an E2/17beta-estradiol-induced pro-apoptotic signaling pathway. E2 stabilizes the PDE3A/SLFN12 complex in the cytosol, promoting the dephosphorylation of SLFN12 and activating its pro-apoptotic ribosomal RNA/rRNA ribonuclease activity. This apoptotic pathway might be relevant in tissues with high concentration of E2 and be for instance involved in placenta remodeling. May play a role in cell differentiation. The protein is Ribonuclease SLFN12 of Homo sapiens (Human).